The primary structure comprises 205 residues: Golgi to ER traffic protein 1 (205 aa).

Topologically, residues M1–I9 are lumenal. A helical membrane pass occupies residues V10 to T29. The Cytoplasmic portion of the chain corresponds to T30–I116. A coiled-coil region spans residues A53 to S103. Residues A117 to F137 traverse the membrane as a helical segment. Residues Y138–G161 lie on the Lumenal side of the membrane. The chain crosses the membrane as a helical span at residues V162 to L178. Residues E179–Q205 lie on the Cytoplasmic side of the membrane.

This sequence belongs to the WRB/GET1 family. In terms of assembly, component of the Golgi to ER traffic (GET) complex, which is composed of GET1, GET2 and GET3. Within the complex, GET1 and GET2 form a heterotetramer which is stabilized by phosphatidylinositol binding and which binds to the GET3 homodimer.

The protein resides in the endoplasmic reticulum membrane. It is found in the golgi apparatus membrane. Required for the post-translational delivery of tail-anchored (TA) proteins to the endoplasmic reticulum. Together with GET2, acts as a membrane receptor for soluble GET3, which recognizes and selectively binds the transmembrane domain of TA proteins in the cytosol. The GET complex cooperates with the HDEL receptor ERD2 to mediate the ATP-dependent retrieval of resident ER proteins that contain a C-terminal H-D-E-L retention signal from the Golgi to the ER. This is Golgi to ER traffic protein 1 from Clavispora lusitaniae (strain ATCC 42720) (Yeast).